Consider the following 310-residue polypeptide: Pyrimidine-specific ribonucleoside hydrolase RihA (310 aa).

His240 is a catalytic residue.

Belongs to the IUNH family. RihA subfamily.

Hydrolyzes cytidine or uridine to ribose and cytosine or uracil, respectively. This is Pyrimidine-specific ribonucleoside hydrolase RihA from Photobacterium profundum (strain SS9).